The chain runs to 204 residues: Ribonuclease HII (204 aa).

Positions 1-197 constitute an RNase H type-2 domain; the sequence is MTLGIDEAGR…KNRILNPKLL (197 aa). A divalent metal cation-binding residues include aspartate 6, glutamate 7, and aspartate 103.

It belongs to the RNase HII family. Mn(2+) is required as a cofactor. Mg(2+) serves as cofactor.

It is found in the cytoplasm. The catalysed reaction is Endonucleolytic cleavage to 5'-phosphomonoester.. In terms of biological role, endonuclease that specifically degrades the RNA of RNA-DNA hybrids. This is Ribonuclease HII from Helicobacter pylori (strain HPAG1).